Consider the following 453-residue polypeptide: uncharacterized protein (453 aa).

This is an uncharacterized protein from Galliformes (FAdV-1).